The primary structure comprises 387 residues: 1-deoxy-D-xylulose 5-phosphate reductoisomerase (387 aa).

The NADPH site is built by Thr11, Gly12, Ser13, Ile14, Gly37, Arg38, Asn39, and Asn125. Lys126 serves as a coordination point for 1-deoxy-D-xylulose 5-phosphate. NADPH is bound at residue Glu127. Asp151 contributes to the Mn(2+) binding site. 1-deoxy-D-xylulose 5-phosphate contacts are provided by Ser152, Glu153, Ser177, and His200. Residue Glu153 participates in Mn(2+) binding. Position 206 (Gly206) interacts with NADPH. 1-deoxy-D-xylulose 5-phosphate contacts are provided by Ser213, Asn218, Lys219, and Glu222. Glu222 contributes to the Mn(2+) binding site.

Belongs to the DXR family. Mg(2+) is required as a cofactor. The cofactor is Mn(2+).

It carries out the reaction 2-C-methyl-D-erythritol 4-phosphate + NADP(+) = 1-deoxy-D-xylulose 5-phosphate + NADPH + H(+). Its pathway is isoprenoid biosynthesis; isopentenyl diphosphate biosynthesis via DXP pathway; isopentenyl diphosphate from 1-deoxy-D-xylulose 5-phosphate: step 1/6. Its function is as follows. Catalyzes the NADPH-dependent rearrangement and reduction of 1-deoxy-D-xylulose-5-phosphate (DXP) to 2-C-methyl-D-erythritol 4-phosphate (MEP). This is 1-deoxy-D-xylulose 5-phosphate reductoisomerase from Desulforamulus reducens (strain ATCC BAA-1160 / DSM 100696 / MI-1) (Desulfotomaculum reducens).